We begin with the raw amino-acid sequence, 408 residues long: Imidazolonepropionase (408 aa).

Fe(3+) is bound by residues histidine 73 and histidine 75. 2 residues coordinate Zn(2+): histidine 73 and histidine 75. Positions 82, 145, and 178 each coordinate 4-imidazolone-5-propanoate. Tyrosine 145 is a binding site for N-formimidoyl-L-glutamate. Position 243 (histidine 243) interacts with Fe(3+). Histidine 243 contacts Zn(2+). 4-imidazolone-5-propanoate is bound at residue glutamine 246. Residue aspartate 318 participates in Fe(3+) binding. Aspartate 318 is a binding site for Zn(2+). Residues asparagine 320 and glycine 322 each contribute to the N-formimidoyl-L-glutamate site. 4-imidazolone-5-propanoate is bound at residue serine 323.

Belongs to the metallo-dependent hydrolases superfamily. HutI family. It depends on Zn(2+) as a cofactor. Fe(3+) is required as a cofactor.

The protein localises to the cytoplasm. The catalysed reaction is 4-imidazolone-5-propanoate + H2O = N-formimidoyl-L-glutamate. Its pathway is amino-acid degradation; L-histidine degradation into L-glutamate; N-formimidoyl-L-glutamate from L-histidine: step 3/3. Its function is as follows. Catalyzes the hydrolytic cleavage of the carbon-nitrogen bond in imidazolone-5-propanoate to yield N-formimidoyl-L-glutamate. It is the third step in the universal histidine degradation pathway. The polypeptide is Imidazolonepropionase (Shewanella loihica (strain ATCC BAA-1088 / PV-4)).